We begin with the raw amino-acid sequence, 263 residues long: 3-oxo-5-alpha-steroid 4-dehydrogenase 1 (263 aa).

5 consecutive transmembrane segments (helical) span residues 16–33, 90–110, 115–135, 155–175, and 213–233; these read MLAALAYLQCAVGCAVLA, ILLAMFLVHYGHRCLIYPFLM, PMPLLACTMAIMFCTFNGYLQ, FLIGFGLWLAGMLINIHSDHI, and YALASWSVQGAAFAFFTFCFL.

This sequence belongs to the steroid 5-alpha reductase family.

It localises to the microsome membrane. The protein localises to the endoplasmic reticulum membrane. It catalyses the reaction a 3-oxo-5alpha-steroid + NADP(+) = a 3-oxo-Delta(4)-steroid + NADPH + H(+). The enzyme catalyses 5alpha-pregnane-3,20-dione + NADP(+) = progesterone + NADPH + H(+). The catalysed reaction is 17beta-hydroxy-5alpha-androstan-3-one + NADP(+) = testosterone + NADPH + H(+). It carries out the reaction androst-4-ene-3,17-dione + NADPH + H(+) = 5alpha-androstan-3,17-dione + NADP(+). In terms of biological role, converts testosterone into 5-alpha-dihydrotestosterone and progesterone or corticosterone into their corresponding 5-alpha-3-oxosteroids. It plays a central role in sexual differentiation and androgen physiology. In Macaca fascicularis (Crab-eating macaque), this protein is 3-oxo-5-alpha-steroid 4-dehydrogenase 1 (SRD5A1).